A 247-amino-acid chain; its full sequence is NAD(P)H-quinone oxidoreductase subunit K, chloroplastic (247 aa).

Cys61, Cys62, Cys126, and Cys157 together coordinate [4Fe-4S] cluster.

Belongs to the complex I 20 kDa subunit family. In terms of assembly, NDH is composed of at least 16 different subunits, 5 of which are encoded in the nucleus. It depends on [4Fe-4S] cluster as a cofactor.

The protein resides in the plastid. It is found in the chloroplast thylakoid membrane. It carries out the reaction a plastoquinone + NADH + (n+1) H(+)(in) = a plastoquinol + NAD(+) + n H(+)(out). The enzyme catalyses a plastoquinone + NADPH + (n+1) H(+)(in) = a plastoquinol + NADP(+) + n H(+)(out). In terms of biological role, NDH shuttles electrons from NAD(P)H:plastoquinone, via FMN and iron-sulfur (Fe-S) centers, to quinones in the photosynthetic chain and possibly in a chloroplast respiratory chain. The immediate electron acceptor for the enzyme in this species is believed to be plastoquinone. Couples the redox reaction to proton translocation, and thus conserves the redox energy in a proton gradient. This is NAD(P)H-quinone oxidoreductase subunit K, chloroplastic from Anthoceros angustus (Hornwort).